The primary structure comprises 116 residues: Regulator of ribonuclease activity B (116 aa).

It belongs to the RraB family. Interacts with the C-terminal region of Rne.

It is found in the cytoplasm. In terms of biological role, globally modulates RNA abundance by binding to RNase E (Rne) and regulating its endonucleolytic activity. Can modulate Rne action in a substrate-dependent manner by altering the composition of the degradosome. The chain is Regulator of ribonuclease activity B from Colwellia psychrerythraea (strain 34H / ATCC BAA-681) (Vibrio psychroerythus).